The sequence spans 503 residues: Trehalose-6-phosphate synthase (503 aa).

R22 serves as a coordination point for D-glucose 6-phosphate. Position 42–43 (42–43) interacts with UDP-alpha-D-glucose; that stretch reads GG. D-glucose 6-phosphate-binding residues include Y94 and D148. Residues R290 and K295 each contribute to the UDP-alpha-D-glucose site. R328 provides a ligand contact to D-glucose 6-phosphate. Position 393–397 (393–397) interacts with UDP-alpha-D-glucose; sequence LVAKE. Residues 481–503 form a disordered region; sequence GETGDSGVTGESTPAPESDSGSF.

Belongs to the glycosyltransferase 20 family. As to quaternary structure, homotetramer.

It catalyses the reaction ADP-alpha-D-glucose + D-glucose 6-phosphate = alpha,alpha-trehalose 6-phosphate + ADP + H(+). It carries out the reaction CDP-alpha-D-glucose + D-glucose 6-phosphate = alpha,alpha-trehalose 6-phosphate + CDP + H(+). The catalysed reaction is GDP-alpha-D-glucose + D-glucose 6-phosphate = alpha,alpha-trehalose 6-phosphate + GDP + H(+). The enzyme catalyses TDP-alpha-D-glucose + D-glucose 6-phosphate = 5-methyl-UDP + alpha,alpha-trehalose 6-phosphate + H(+). It catalyses the reaction D-glucose 6-phosphate + UDP-alpha-D-glucose = alpha,alpha-trehalose 6-phosphate + UDP + H(+). It participates in glycan biosynthesis; trehalose biosynthesis. With respect to regulation, stimulated by the polynucleotide FII (physiological activator), and by chondroitin sulfate (CS) and heparin. Activation by the polyanion is inhibited by high salt concentration as well as by high concentrations of mononucleoside phosphates. In terms of biological role, involved in the production of glycogen and alpha-glucan via the TreS-Pep2 branch involved in the biosynthesis of maltose-1-phosphate (M1P), and probably in the osmoprotection via the biosynthesis of trehalose. Catalyzes the transfer of glucose from UDP-glucose (UDP-Glc) to glucose-6-phosphate (Glc-6-P) to form trehalose-6-phosphate. ADP-Glc, CDP-Glc, GDP-Glc and TDP-Glc are also glucosyl donors, however, when the pyrimidine sugar nucleotides (CDP-Glc, TDP-Glc and UDP-Glc) are used as substrates, there is an absolute requirement for a high molecular weight polyanion for activity. This Mycolicibacterium smegmatis (strain ATCC 700084 / mc(2)155) (Mycobacterium smegmatis) protein is Trehalose-6-phosphate synthase.